A 137-amino-acid polypeptide reads, in one-letter code: 3-hydroxyacyl-[acyl-carrier-protein] dehydratase FabZ (137 aa).

His-46 is a catalytic residue.

The protein belongs to the thioester dehydratase family. FabZ subfamily.

It is found in the cytoplasm. It catalyses the reaction a (3R)-hydroxyacyl-[ACP] = a (2E)-enoyl-[ACP] + H2O. In terms of biological role, involved in unsaturated fatty acids biosynthesis. Catalyzes the dehydration of short chain beta-hydroxyacyl-ACPs and long chain saturated and unsaturated beta-hydroxyacyl-ACPs. The protein is 3-hydroxyacyl-[acyl-carrier-protein] dehydratase FabZ of Thermotoga neapolitana (strain ATCC 49049 / DSM 4359 / NBRC 107923 / NS-E).